A 564-amino-acid chain; its full sequence is Beta-catenin-like protein 1 homolog (564 aa).

Residues 1 to 56 form a disordered region; it reads MDVDSIFKNTEETNKKRNPEEADSLEPASSRRRLAEENSDEENEEFDEEGGRFFGS. A compositionally biased stretch (basic and acidic residues) spans 9-20; the sequence is NTEETNKKRNPE. Over residues 37–48 the composition is skewed to acidic residues; that stretch reads ENSDEENEEFDE. Ser39 is subject to Phosphoserine. 2 HEAT repeats span residues 83-133 and 138-177; these read PTEL…VLSE and IPIF…DEDV. ARM repeat units lie at residues 179 to 229, 230 to 276, 277 to 326, 328 to 366, and 367 to 411; these read PDAL…LLSV, DNSI…LANS, KEAK…LVQE, KGKS…LLFG, and PLST…LFRS. Positions 465–528 form a coiled coil; sequence EKSTKWFLQQ…DALKNYHENL (64 aa).

The protein resides in the nucleus. Probable spliceosomal component involved in the activation of pre-mRNA splicing. The polypeptide is Beta-catenin-like protein 1 homolog (ctnnbl1) (Schizosaccharomyces pombe (strain 972 / ATCC 24843) (Fission yeast)).